We begin with the raw amino-acid sequence, 414 residues long: Dual-specificity RNA methyltransferase RlmN (414 aa).

Residues 1-20 show a composition bias toward low complexity; sequence MMSTPETATEATAPEAAPAP. Residues 1–24 form a disordered region; that stretch reads MMSTPETATEATAPEAAPAPSLGA. E129 (proton acceptor) is an active-site residue. A Radical SAM core domain is found at 135–385; sequence ESDRGTLCVS…VRTPRGRDIL (251 aa). An intrachain disulfide couples C142 to C388. C149, C153, and C156 together coordinate [4Fe-4S] cluster. Residues 214 to 215, S246, 268 to 270, and N345 contribute to the S-adenosyl-L-methionine site; these read GE and SLH. C388 functions as the S-methylcysteine intermediate in the catalytic mechanism.

Belongs to the radical SAM superfamily. RlmN family. [4Fe-4S] cluster serves as cofactor.

The protein localises to the cytoplasm. It catalyses the reaction adenosine(2503) in 23S rRNA + 2 reduced [2Fe-2S]-[ferredoxin] + 2 S-adenosyl-L-methionine = 2-methyladenosine(2503) in 23S rRNA + 5'-deoxyadenosine + L-methionine + 2 oxidized [2Fe-2S]-[ferredoxin] + S-adenosyl-L-homocysteine. It carries out the reaction adenosine(37) in tRNA + 2 reduced [2Fe-2S]-[ferredoxin] + 2 S-adenosyl-L-methionine = 2-methyladenosine(37) in tRNA + 5'-deoxyadenosine + L-methionine + 2 oxidized [2Fe-2S]-[ferredoxin] + S-adenosyl-L-homocysteine. Specifically methylates position 2 of adenine 2503 in 23S rRNA and position 2 of adenine 37 in tRNAs. m2A2503 modification seems to play a crucial role in the proofreading step occurring at the peptidyl transferase center and thus would serve to optimize ribosomal fidelity. The sequence is that of Dual-specificity RNA methyltransferase RlmN from Xanthobacter autotrophicus (strain ATCC BAA-1158 / Py2).